The following is a 504-amino-acid chain: MKNKVQLITYADRLGDGTIKSMTDILRTRFDGVYDGVHILPFFTPFDGADAGFDPIDHTKVDERLGSWDDVAELSKTHNIMVDAIVNHMSWESKQFQDVLAKGEESEYYPMFLTMSSVFPNGATEEDLAGIYRPRPGLPFTHYKFAGKTRLVWVSFTPQQVDIDTDSDKGWEYLMSIFDQMAASHVSYIRLDAVGYGAKEAGTSCFMTPKTFKLISRLREEGVKRGLEILIEVHSYYKKQVEIASKVDRVYDFALPPLLLHALSTGHVEPVAHWTDIRPNNAVTVLDTHDGIGVIDIGSDQLDRSLKGLVPDEDVDNLVNTIHANTHGESQAATGAAASNLDLYQVNSTYYSALGCNDQHYIAARAVQFFLPGVPQVYYVGALAGKNDMELLRKTNNGRDINRHYYSTAEIDENLKRPVVKALNALAKFRNELDAFDGTFSYTTDDDTSISFTWRGETSQATLTFEPKRGLGVDNTTPVAMLEWEDSAGDHRSDDLIANPPVVA.

Aspartate 50 provides a ligand contact to substrate. Sucrose is bound by residues histidine 88, 190 to 192 (RLD), glutamate 232, 289 to 290 (HD), 342 to 345 (DLYQ), and arginine 399. Catalysis depends on aspartate 192, which acts as the Nucleophile. Glutamate 232 functions as the Proton donor in the catalytic mechanism.

This sequence belongs to the glycosyl hydrolase 13 family. Sucrose phosphorylase subfamily. Homodimer.

The catalysed reaction is sucrose + phosphate = D-fructose + alpha-D-glucose 1-phosphate. Functionally, catalyzes the reversible phosphorolysis of sucrose into alpha-D-glucose 1-phosphate (Glc1P) and D-fructose. Is involved in sucrose degradation. Also displays transglucosylation activity in vitro, by transferring the glucosyl moiety of Glc1P to a broad range of monomeric sugars, such as D- and L-arabinose, D- and L-arabitol, and xylitol. The protein is Sucrose phosphorylase of Bifidobacterium adolescentis (strain ATCC 15703 / DSM 20083 / NCTC 11814 / E194a).